The following is a 168-amino-acid chain: Peptidoglycan-associated lipoprotein (168 aa).

Residues 1–24 form the signal peptide; the sequence is MGRIAALTRNPVMIALVAMLAIAG. Residue Cys-25 is the site of N-palmitoyl cysteine attachment. Cys-25 is lipidated: S-diacylglycerol cysteine. One can recognise an OmpA-like domain in the interval 50–167; sequence AQDFTVNIGD…RAVTTLSGAG (118 aa).

The protein belongs to the Pal lipoprotein family. As to quaternary structure, the Tol-Pal system is composed of five core proteins: the inner membrane proteins TolA, TolQ and TolR, the periplasmic protein TolB and the outer membrane protein Pal. They form a network linking the inner and outer membranes and the peptidoglycan layer.

It is found in the cell outer membrane. Functionally, part of the Tol-Pal system, which plays a role in outer membrane invagination during cell division and is important for maintaining outer membrane integrity. The sequence is that of Peptidoglycan-associated lipoprotein from Mesorhizobium japonicum (strain LMG 29417 / CECT 9101 / MAFF 303099) (Mesorhizobium loti (strain MAFF 303099)).